Here is a 251-residue protein sequence, read N- to C-terminus: Ribonuclease PH (251 aa).

Residues Arg90 and 128–130 each bind phosphate; that span reads GTR.

This sequence belongs to the RNase PH family. Homohexameric ring arranged as a trimer of dimers.

It catalyses the reaction tRNA(n+1) + phosphate = tRNA(n) + a ribonucleoside 5'-diphosphate. Functionally, phosphorolytic 3'-5' exoribonuclease that plays an important role in tRNA 3'-end maturation. Removes nucleotide residues following the 3'-CCA terminus of tRNAs; can also add nucleotides to the ends of RNA molecules by using nucleoside diphosphates as substrates, but this may not be physiologically important. Probably plays a role in initiation of 16S rRNA degradation (leading to ribosome degradation) during starvation. The chain is Ribonuclease PH from Leifsonia xyli subsp. xyli (strain CTCB07).